The following is a 436-amino-acid chain: Histidinol dehydrogenase (436 aa).

Residues S237, Q259, and H262 each coordinate substrate. Positions 259 and 262 each coordinate Zn(2+). Catalysis depends on proton acceptor residues E327 and H328. Substrate-binding residues include H328, D361, E415, and H420. Position 361 (D361) interacts with Zn(2+). H420 is a binding site for Zn(2+).

Belongs to the histidinol dehydrogenase family. It depends on Zn(2+) as a cofactor.

It carries out the reaction L-histidinol + 2 NAD(+) + H2O = L-histidine + 2 NADH + 3 H(+). Its pathway is amino-acid biosynthesis; L-histidine biosynthesis; L-histidine from 5-phospho-alpha-D-ribose 1-diphosphate: step 9/9. Functionally, catalyzes the sequential NAD-dependent oxidations of L-histidinol to L-histidinaldehyde and then to L-histidine. The polypeptide is Histidinol dehydrogenase (Helicobacter hepaticus (strain ATCC 51449 / 3B1)).